The chain runs to 338 residues: Ketol-acid reductoisomerase (NADP(+)) (338 aa).

The KARI N-terminal Rossmann domain occupies 1–181 (MKVYYDKDAD…GGTKGGVIET (181 aa)). NADP(+)-binding positions include 24–27 (YGSQ), arginine 47, serine 52, and 82–85 (DESQ). Residue histidine 107 is part of the active site. An NADP(+)-binding site is contributed by glycine 133. One can recognise a KARI C-terminal knotted domain in the interval 182-327 (NFREETETDL…AELRAMMPWI (146 aa)). Residues aspartate 190, glutamate 194, glutamate 226, and glutamate 230 each coordinate Mg(2+). Substrate is bound at residue serine 251.

The protein belongs to the ketol-acid reductoisomerase family. Mg(2+) is required as a cofactor.

The enzyme catalyses (2R)-2,3-dihydroxy-3-methylbutanoate + NADP(+) = (2S)-2-acetolactate + NADPH + H(+). The catalysed reaction is (2R,3R)-2,3-dihydroxy-3-methylpentanoate + NADP(+) = (S)-2-ethyl-2-hydroxy-3-oxobutanoate + NADPH + H(+). The protein operates within amino-acid biosynthesis; L-isoleucine biosynthesis; L-isoleucine from 2-oxobutanoate: step 2/4. It participates in amino-acid biosynthesis; L-valine biosynthesis; L-valine from pyruvate: step 2/4. Its function is as follows. Involved in the biosynthesis of branched-chain amino acids (BCAA). Catalyzes an alkyl-migration followed by a ketol-acid reduction of (S)-2-acetolactate (S2AL) to yield (R)-2,3-dihydroxy-isovalerate. In the isomerase reaction, S2AL is rearranged via a Mg-dependent methyl migration to produce 3-hydroxy-3-methyl-2-ketobutyrate (HMKB). In the reductase reaction, this 2-ketoacid undergoes a metal-dependent reduction by NADPH to yield (R)-2,3-dihydroxy-isovalerate. The chain is Ketol-acid reductoisomerase (NADP(+)) from Chromobacterium violaceum (strain ATCC 12472 / DSM 30191 / JCM 1249 / CCUG 213 / NBRC 12614 / NCIMB 9131 / NCTC 9757 / MK).